The chain runs to 129 residues: Lysozyme C (129 aa).

The region spanning 1–129 is the C-type lysozyme domain; sequence KVFGRCELAA…VHAWIRGCRL (129 aa). Disulfide bonds link cysteine 6–cysteine 127, cysteine 30–cysteine 115, cysteine 64–cysteine 80, and cysteine 76–cysteine 94. Residues glutamate 35 and aspartate 52 contribute to the active site.

It belongs to the glycosyl hydrolase 22 family. As to quaternary structure, monomer.

Its subcellular location is the secreted. The catalysed reaction is Hydrolysis of (1-&gt;4)-beta-linkages between N-acetylmuramic acid and N-acetyl-D-glucosamine residues in a peptidoglycan and between N-acetyl-D-glucosamine residues in chitodextrins.. In terms of biological role, lysozymes have primarily a bacteriolytic function; those in tissues and body fluids are associated with the monocyte-macrophage system and enhance the activity of immunoagents. This chain is Lysozyme C (LYZ), found in Callipepla californica (California quail).